A 432-amino-acid polypeptide reads, in one-letter code: MSLNIETTQGLERRVAITVPTEIVSKAVREEFKRAAKNVRVDGFRKGHVPAHIIEQRFGASIRQDVLNDLLPRHFFNAVIAEKINIAGRPTFAIETFEEGKDLVFTATFEVYPEVKLQGLENIKVEKPTVEITEADIDKMIDVLRKQQATWAESQDVVKADDRVTIDFVGSVDGEEFEGGKATDFVLFMGQGRMIPGFEEGIVGHKAGEQFDIDVTFPAEYHAENLKGKAAKFAITLKKIENMVLPELTDEFVAKFGPNTKSVADLRAEIRKNMERELKNALVSRVKQQVINGLIEQNPIDVPVSAVEEEINVLRNQAAQRFGGNAQQTAQLPRELFEAEATRRVQVGLLFSEVIKSNELKADEERAKAMIADIASAYEQPAEVVEYYSKNEELMNNIRNVVLEEQAVDAVLAKAQVTEKVSSFDEIMNPQA.

Residues 161 to 246 (DDRVTIDFVG…LKKIENMVLP (86 aa)) enclose the PPIase FKBP-type domain.

It belongs to the FKBP-type PPIase family. Tig subfamily.

The protein localises to the cytoplasm. The enzyme catalyses [protein]-peptidylproline (omega=180) = [protein]-peptidylproline (omega=0). Its function is as follows. Involved in protein export. Acts as a chaperone by maintaining the newly synthesized protein in an open conformation. Functions as a peptidyl-prolyl cis-trans isomerase. This is Trigger factor (tig) from Haemophilus influenzae (strain ATCC 51907 / DSM 11121 / KW20 / Rd).